Consider the following 759-residue polypeptide: DNA topoisomerase 4 subunit A (759 aa).

The Topo IIA-type catalytic domain maps to 44-516; sequence LPDVRDGLKP…VFGEAPQVDA (473 aa). Catalysis depends on Tyr132, which acts as the O-(5'-phospho-DNA)-tyrosine intermediate.

It belongs to the type II topoisomerase GyrA/ParC subunit family. ParC type 1 subfamily. As to quaternary structure, heterotetramer composed of ParC and ParE.

It localises to the cell membrane. The enzyme catalyses ATP-dependent breakage, passage and rejoining of double-stranded DNA.. Its function is as follows. Topoisomerase IV is essential for chromosome segregation. It relaxes supercoiled DNA. Performs the decatenation events required during the replication of a circular DNA molecule. This Caulobacter vibrioides (strain ATCC 19089 / CIP 103742 / CB 15) (Caulobacter crescentus) protein is DNA topoisomerase 4 subunit A.